A 372-amino-acid chain; its full sequence is Adaptive-response sensory kinase SasA (372 aa).

Residues 147-360 (MVAHELRTPL…CFHFTVPVWQ (214 aa)) enclose the Histidine kinase domain. Phosphohistidine; by autocatalysis is present on His-150.

In terms of assembly, homooligomerizes. Interacts with KaiC. Participates in the KaiBC complex, whose core is composed of a KaiC homohexamer and 6 KaiB.

It carries out the reaction ATP + protein L-histidine = ADP + protein N-phospho-L-histidine.. Member of the two-component regulatory system SasA/RpaA involved in genome-wide circadian gene expression. One of several clock output pathways. Participates in the Kai clock protein complex, the main circadian regulator in cyanobacteria, via its interaction with KaiC. KaiC enhances the autophosphorylation activity of SasA, which then transfers its phosphate group to RpaA to activate it. In addition to its output function, recruits fold-shifted KaiB (KaiB(fs)) to KaiC to cooperatively form the KaiB(6):KaiC(6) complex (independent of SasA kinase activity). Required for robustness of the circadian rhythm of gene expression and is involved in clock output, also required for adaptation to light/dark cycles. The protein is Adaptive-response sensory kinase SasA of Prochlorococcus marinus (strain AS9601).